A 650-amino-acid polypeptide reads, in one-letter code: Phosphomethylpyrimidine synthase (650 aa).

Substrate is bound by residues Asn241, Met270, Tyr299, His335, Ser355–Gly357, Asp396–Arg399, and Glu435. Residue His439 coordinates Zn(2+). A substrate-binding site is contributed by Tyr462. His503 contacts Zn(2+). Cys583, Cys586, and Cys591 together coordinate [4Fe-4S] cluster.

The protein belongs to the ThiC family. In terms of assembly, homodimer. Requires [4Fe-4S] cluster as cofactor.

The enzyme catalyses 5-amino-1-(5-phospho-beta-D-ribosyl)imidazole + S-adenosyl-L-methionine = 4-amino-2-methyl-5-(phosphooxymethyl)pyrimidine + CO + 5'-deoxyadenosine + formate + L-methionine + 3 H(+). It functions in the pathway cofactor biosynthesis; thiamine diphosphate biosynthesis. In terms of biological role, catalyzes the synthesis of the hydroxymethylpyrimidine phosphate (HMP-P) moiety of thiamine from aminoimidazole ribotide (AIR) in a radical S-adenosyl-L-methionine (SAM)-dependent reaction. The sequence is that of Phosphomethylpyrimidine synthase from Pseudoalteromonas translucida (strain TAC 125).